The primary structure comprises 151 residues: Macrodomain Ter protein (151 aa).

Belongs to the MatP family. As to quaternary structure, homodimer.

It localises to the cytoplasm. In terms of biological role, required for spatial organization of the terminus region of the chromosome (Ter macrodomain) during the cell cycle. Prevents early segregation of duplicated Ter macrodomains during cell division. Binds specifically to matS, which is a 13 bp signature motif repeated within the Ter macrodomain. The chain is Macrodomain Ter protein from Escherichia fergusonii (strain ATCC 35469 / DSM 13698 / CCUG 18766 / IAM 14443 / JCM 21226 / LMG 7866 / NBRC 102419 / NCTC 12128 / CDC 0568-73).